We begin with the raw amino-acid sequence, 623 residues long: NAD-dependent malic enzyme, mitochondrial (623 aa).

A mitochondrion-targeting transit peptide spans 1–31 (MLVLCSRSRLTSSLIRRLKDQIANVSNHRSF). Fumarate contacts are provided by Arg-88 and Arg-122. Catalysis depends on Ser-143, which acts as the Proton donor. Arg-196 is a (S)-malate binding site. Arg-196 is a binding site for NAD(+). Lys-214 acts as the Proton acceptor in catalysis. A divalent metal cation-binding residues include Glu-285 and Asp-286. Asn-289 is an NAD(+) binding site. Asp-309 is an a divalent metal cation binding site. Ala-345 contributes to the NAD(+) binding site. (S)-malate contacts are provided by Asn-464 and Asn-509.

The protein belongs to the malic enzymes family. In terms of assembly, heterodimer of two related subunits. Requires Mg(2+) as cofactor. Mn(2+) serves as cofactor.

The protein localises to the mitochondrion matrix. It carries out the reaction (S)-malate + NAD(+) = pyruvate + CO2 + NADH. Its pathway is photosynthesis; C4 acid pathway. The protein is NAD-dependent malic enzyme, mitochondrial of Amaranthus hypochondriacus (Prince-of-Wales feather).